The sequence spans 118 residues: Small ribosomal subunit protein uS13 (118 aa).

The interval 94–118 (SLPLRGQRTKTNARTRKGPRKPIKK) is disordered.

This sequence belongs to the universal ribosomal protein uS13 family. Part of the 30S ribosomal subunit. Forms a loose heterodimer with protein S19. Forms two bridges to the 50S subunit in the 70S ribosome.

Located at the top of the head of the 30S subunit, it contacts several helices of the 16S rRNA. In the 70S ribosome it contacts the 23S rRNA (bridge B1a) and protein L5 of the 50S subunit (bridge B1b), connecting the 2 subunits; these bridges are implicated in subunit movement. Contacts the tRNAs in the A and P-sites. The chain is Small ribosomal subunit protein uS13 from Shewanella oneidensis (strain ATCC 700550 / JCM 31522 / CIP 106686 / LMG 19005 / NCIMB 14063 / MR-1).